We begin with the raw amino-acid sequence, 189 residues long: Interferon alpha-5 (189 aa).

Positions 1–23 (MARLCAFLMVLPVLSYWPTCSLG) are cleaved as a signal peptide. 2 disulfides stabilise this stretch: Cys24/Cys122 and Cys52/Cys162. Residue Asn101 is glycosylated (N-linked (GlcNAc...) asparagine).

Belongs to the alpha/beta interferon family.

It localises to the secreted. In terms of biological role, produced by macrophages, IFN-alpha have antiviral activities. Interferon stimulates the production of two enzymes: a protein kinase and an oligoadenylate synthetase. The chain is Interferon alpha-5 (Ifna5) from Mus musculus (Mouse).